We begin with the raw amino-acid sequence, 512 residues long: Bifunctional purine biosynthesis protein PurH (512 aa).

Residues 1–144 (MKRALVSVSD…KNYHDVTIVV (144 aa)) enclose the MGS-like domain.

Belongs to the PurH family.

It catalyses the reaction (6R)-10-formyltetrahydrofolate + 5-amino-1-(5-phospho-beta-D-ribosyl)imidazole-4-carboxamide = 5-formamido-1-(5-phospho-D-ribosyl)imidazole-4-carboxamide + (6S)-5,6,7,8-tetrahydrofolate. The enzyme catalyses IMP + H2O = 5-formamido-1-(5-phospho-D-ribosyl)imidazole-4-carboxamide. It functions in the pathway purine metabolism; IMP biosynthesis via de novo pathway; 5-formamido-1-(5-phospho-D-ribosyl)imidazole-4-carboxamide from 5-amino-1-(5-phospho-D-ribosyl)imidazole-4-carboxamide (10-formyl THF route): step 1/1. The protein operates within purine metabolism; IMP biosynthesis via de novo pathway; IMP from 5-formamido-1-(5-phospho-D-ribosyl)imidazole-4-carboxamide: step 1/1. The sequence is that of Bifunctional purine biosynthesis protein PurH from Limosilactobacillus reuteri (strain DSM 20016) (Lactobacillus reuteri).